The chain runs to 223 residues: MNIAKLIDHTILKANTTKEDVMKVIEEAKEYKFASVCINPPWVKLAADELAGHDVDVCTVIGFPLGASTTETKAFETKDAIAKGATEVDMVINVGALKDGDNELVEKDIYEVVQAAKGKALVKVIIETCLLTDEEKVRACELSVKAGADFVKTSTGFSTGGATAEDIALMRKTVGPNVGVKASGGVRTREDADKMVAAGASRVGASASVAIVLNDAKGATDNY.

D89 acts as the Proton donor/acceptor in catalysis. The active-site Schiff-base intermediate with acetaldehyde is K152. Catalysis depends on K181, which acts as the Proton donor/acceptor.

It belongs to the DeoC/FbaB aldolase family. DeoC type 1 subfamily.

It is found in the cytoplasm. It catalyses the reaction 2-deoxy-D-ribose 5-phosphate = D-glyceraldehyde 3-phosphate + acetaldehyde. Its pathway is carbohydrate degradation; 2-deoxy-D-ribose 1-phosphate degradation; D-glyceraldehyde 3-phosphate and acetaldehyde from 2-deoxy-alpha-D-ribose 1-phosphate: step 2/2. Its function is as follows. Catalyzes a reversible aldol reaction between acetaldehyde and D-glyceraldehyde 3-phosphate to generate 2-deoxy-D-ribose 5-phosphate. The protein is Deoxyribose-phosphate aldolase of Bacillus cereus (strain ATCC 14579 / DSM 31 / CCUG 7414 / JCM 2152 / NBRC 15305 / NCIMB 9373 / NCTC 2599 / NRRL B-3711).